Here is a 1078-residue protein sequence, read N- to C-terminus: A type blood alpha-D-galactosamine galactosaminidase (1078 aa).

The N-terminal stretch at 1-26 (MRGKKFISLTLSTMLCLQLLPTASFA) is a signal peptide. The glycoside hydrolase 36 domain stretch occupies residues 306 to 570 (PDSSYDLRWE…NNIWYPSAVG (265 aa)). Residue Asp463 is the Nucleophile of the active site. Residue Asp532 is part of the active site. The not required for activity on soluble substrates stretch occupies residues 699-1078 (PDPEPVDPDY…LDYLTYTTNA (380 aa)).

Belongs to the glycosyl hydrolase 36 family.

It carries out the reaction an alpha-D-galactosaminyl-(1-&gt;3)-[alpha-L-fucosyl-(1-&gt;2)]-beta-D-galactosyl derivative + H2O = D-galactosamine + an alpha-L-fucosyl-(1-&gt;2)-beta-D-galactosyl derivative. In terms of biological role, one of an enzyme pair that work together to convert the A antigen to the H antigen of the O blood type, which together release galactosamine. Catalyzes the second step in the conversion, acts on the product of the first reaction (FpGalNAcDeAc, AC P0DTR4). Is specific for galactosamine containing sugars, does not cleave GalNAc residues. In Flavonifractor plautii (Fusobacterium plautii), this protein is A type blood alpha-D-galactosamine galactosaminidase.